The following is a 115-amino-acid chain: Large ribosomal subunit protein bL19 (115 aa).

Belongs to the bacterial ribosomal protein bL19 family.

Its function is as follows. This protein is located at the 30S-50S ribosomal subunit interface and may play a role in the structure and function of the aminoacyl-tRNA binding site. This is Large ribosomal subunit protein bL19 from Thermosipho melanesiensis (strain DSM 12029 / CIP 104789 / BI429).